Reading from the N-terminus, the 347-residue chain is UDP-3-O-acylglucosamine N-acyltransferase (347 aa).

Histidine 248 acts as the Proton acceptor in catalysis.

Belongs to the transferase hexapeptide repeat family. LpxD subfamily. In terms of assembly, homotrimer.

The enzyme catalyses a UDP-3-O-[(3R)-3-hydroxyacyl]-alpha-D-glucosamine + a (3R)-hydroxyacyl-[ACP] = a UDP-2-N,3-O-bis[(3R)-3-hydroxyacyl]-alpha-D-glucosamine + holo-[ACP] + H(+). Its pathway is bacterial outer membrane biogenesis; LPS lipid A biosynthesis. In terms of biological role, catalyzes the N-acylation of UDP-3-O-acylglucosamine using 3-hydroxyacyl-ACP as the acyl donor. Is involved in the biosynthesis of lipid A, a phosphorylated glycolipid that anchors the lipopolysaccharide to the outer membrane of the cell. This chain is UDP-3-O-acylglucosamine N-acyltransferase, found in Synechococcus sp. (strain CC9902).